The chain runs to 79 residues: ATP synthase subunit 9, mitochondrial (79 aa).

The next 2 membrane-spanning stretches (helical) occupy residues 21–41 (SGLI…ILAF) and 59–79 (FALT…ILFI).

Belongs to the ATPase C chain family. In terms of assembly, F-type ATPases have 2 components, CF(1) - the catalytic core - and CF(0) - the membrane proton channel. CF(1) has five subunits: alpha(3), beta(3), gamma(1), delta(1), epsilon(1). CF(0) has three main subunits: a, b and c.

The protein resides in the mitochondrion membrane. Mitochondrial membrane ATP synthase (F(1)F(0) ATP synthase or Complex V) produces ATP from ADP in the presence of a proton gradient across the membrane which is generated by electron transport complexes of the respiratory chain. F-type ATPases consist of two structural domains, F(1) - containing the extramembraneous catalytic core and F(0) - containing the membrane proton channel, linked together by a central stalk and a peripheral stalk. During catalysis, ATP synthesis in the catalytic domain of F(1) is coupled via a rotary mechanism of the central stalk subunits to proton translocation. Part of the complex F(0) domain. A homomeric c-ring of probably 10 subunits is part of the complex rotary element. The protein is ATP synthase subunit 9, mitochondrial (ATP9) of Acanthamoeba castellanii (Amoeba).